The primary structure comprises 380 residues: Cytochrome b (380 aa).

Helical transmembrane passes span 34–54, 78–99, 114–134, and 179–199; these read FGSLLAVCLATQIITGLLLAA, WLIRNLHANGASFFFICIYLHI, WNTGVILLLTLMATAFVGYVL, and FFALHFLLPFIIAGITIIHLA. Positions 84 and 98 each coordinate heme b. Residues His183 and His197 each coordinate heme b. Residue His202 participates in a ubiquinone binding. The next 4 helical transmembrane spans lie at 227–247, 289–309, 321–341, and 348–368; these read LKDILGLALMITPLLTLALFS, LGGVLALAASVFILFLIPLLH, LSQLLFWLLAANLFILTWIGS, and FIIIGQLASLSYFTTLLILFP.

It belongs to the cytochrome b family. As to quaternary structure, the cytochrome bc1 complex contains 11 subunits: 3 respiratory subunits (MT-CYB, CYC1 and UQCRFS1), 2 core proteins (UQCRC1 and UQCRC2) and 6 low-molecular weight proteins (UQCRH/QCR6, UQCRB/QCR7, UQCRQ/QCR8, UQCR10/QCR9, UQCR11/QCR10 and a cleavage product of UQCRFS1). This cytochrome bc1 complex then forms a dimer. It depends on heme b as a cofactor.

The protein localises to the mitochondrion inner membrane. Functionally, component of the ubiquinol-cytochrome c reductase complex (complex III or cytochrome b-c1 complex) that is part of the mitochondrial respiratory chain. The b-c1 complex mediates electron transfer from ubiquinol to cytochrome c. Contributes to the generation of a proton gradient across the mitochondrial membrane that is then used for ATP synthesis. The sequence is that of Cytochrome b (MT-CYB) from Cyrtonyx montezumae (Montezuma quail).